A 113-amino-acid polypeptide reads, in one-letter code: Ribonuclease P protein component (113 aa).

Belongs to the RnpA family. As to quaternary structure, consists of a catalytic RNA component (M1 or rnpB) and a protein subunit.

It carries out the reaction Endonucleolytic cleavage of RNA, removing 5'-extranucleotides from tRNA precursor.. Its function is as follows. RNaseP catalyzes the removal of the 5'-leader sequence from pre-tRNA to produce the mature 5'-terminus. It can also cleave other RNA substrates such as 4.5S RNA. The protein component plays an auxiliary but essential role in vivo by binding to the 5'-leader sequence and broadening the substrate specificity of the ribozyme. The chain is Ribonuclease P protein component from Ureaplasma parvum serovar 3 (strain ATCC 27815 / 27 / NCTC 11736).